The following is a 109-amino-acid chain: uncharacterized protein (109 aa).

This is an uncharacterized protein from Saccharomyces cerevisiae (strain ATCC 204508 / S288c) (Baker's yeast).